The following is a 470-amino-acid chain: MIDKEVIVIGAGLAGSEAAWQIANAGVPVKLVEMRPYKSTPAHHTGEFGELVCSNSFGAISADRAAGLLQKELRIFNSLIVQTADKFAVPAGGALAVDRSKFSNALTETLSNHPLINIKRIEQLDLPSKENITILATGPLTSDDLAYKIQDFTGIDDCHFFDAASPIIYGDSIDHEIVFKASRYDKGDPAYLNCPMDKYEYTNFRNQLIEGEQANLKDFEKESANFFEACLPIEEIARRGIDTMRYGPLKSIGLWNPKWGDLFDRDNRLKKRPHAIVQLRKEDLEGKLLNMVGFQTNLKWSEQKRIFRIIPGLEKAEFVRFGVMHRNTFLESPKLLLPTLQFMKRESLFAAGQITGTEGYAAAAAGGLLAGINASLIAKGEIAVTFPDESMIGSLMNFISNRNKIMSSQKKNKFQPIPASFGLVPELTKRIKDKRSRYIAYQQRSVDVLNIFKRKLDYIFNKDHTLVKIN.

10-15 (GAGLAG) provides a ligand contact to FAD.

Belongs to the MnmG family. TrmFO subfamily. The cofactor is FAD.

It localises to the cytoplasm. The catalysed reaction is uridine(54) in tRNA + (6R)-5,10-methylene-5,6,7,8-tetrahydrofolate + NADH + H(+) = 5-methyluridine(54) in tRNA + (6S)-5,6,7,8-tetrahydrofolate + NAD(+). It catalyses the reaction uridine(54) in tRNA + (6R)-5,10-methylene-5,6,7,8-tetrahydrofolate + NADPH + H(+) = 5-methyluridine(54) in tRNA + (6S)-5,6,7,8-tetrahydrofolate + NADP(+). Its function is as follows. Catalyzes the folate-dependent formation of 5-methyl-uridine at position 54 (M-5-U54) in all tRNAs. The sequence is that of Methylenetetrahydrofolate--tRNA-(uracil-5-)-methyltransferase TrmFO from Prochlorococcus marinus (strain MIT 9312).